Reading from the N-terminus, the 191-residue chain is Divergent paired-related homeobox (191 aa).

Basic and acidic residues predominate over residues Met-1–His-15. The tract at residues Met-1 to Arg-20 is disordered. A DNA-binding region (homeobox) is located at residues Ser-16–Lys-75.

Belongs to the paired homeobox family.

It is found in the nucleus. In terms of biological role, transcription factor that acts as a repressor. The sequence is that of Divergent paired-related homeobox from Homo sapiens (Human).